Here is a 243-residue protein sequence, read N- to C-terminus: uncharacterized protein (243 aa).

A helical membrane pass occupies residues 55–75 (IILIILLTIFMVISTLVIAFV).

The protein resides in the membrane. This is an uncharacterized protein from Rickettsia prowazekii (strain Madrid E).